Consider the following 680-residue polypeptide: tRNA 5-methylaminomethyl-2-thiouridine biosynthesis bifunctional protein MnmC (680 aa).

The segment at 1-267 (MTAEPNKPCQ…MAAILSSDAP (267 aa)) is tRNA (mnm(5)s(2)U34)-methyltransferase. The segment at 273 to 680 (IGGGLASAHL…LRKLLKGKSL (408 aa)) is FAD-dependent cmnm(5)s(2)U34 oxidoreductase.

The protein in the N-terminal section; belongs to the methyltransferase superfamily. tRNA (mnm(5)s(2)U34)-methyltransferase family. In the C-terminal section; belongs to the DAO family. FAD serves as cofactor.

The protein resides in the cytoplasm. The enzyme catalyses 5-aminomethyl-2-thiouridine(34) in tRNA + S-adenosyl-L-methionine = 5-methylaminomethyl-2-thiouridine(34) in tRNA + S-adenosyl-L-homocysteine + H(+). Catalyzes the last two steps in the biosynthesis of 5-methylaminomethyl-2-thiouridine (mnm(5)s(2)U) at the wobble position (U34) in tRNA. Catalyzes the FAD-dependent demodification of cmnm(5)s(2)U34 to nm(5)s(2)U34, followed by the transfer of a methyl group from S-adenosyl-L-methionine to nm(5)s(2)U34, to form mnm(5)s(2)U34. This is tRNA 5-methylaminomethyl-2-thiouridine biosynthesis bifunctional protein MnmC from Shewanella sp. (strain W3-18-1).